The following is a 62-amino-acid chain: Sperm protamine P1 (62 aa).

A disordered region spans residues 1–62; the sequence is MARYRHSRSR…RYSRRRRRRY (62 aa).

This sequence belongs to the protamine P1 family. As to expression, testis.

The protein localises to the nucleus. The protein resides in the chromosome. Functionally, protamines substitute for histones in the chromatin of sperm during the haploid phase of spermatogenesis. They compact sperm DNA into a highly condensed, stable and inactive complex. This is Sperm protamine P1 (PRM1) from Bettongia penicillata (Brush-tailed bettong).